The primary structure comprises 321 residues: Lipoyl synthase (321 aa).

The [4Fe-4S] cluster site is built by C68, C73, C79, C94, C98, C101, and S308. Positions 80-297 constitute a Radical SAM core domain; sequence FNHGTATFMI…KAYADEIGFT (218 aa).

It belongs to the radical SAM superfamily. Lipoyl synthase family. Requires [4Fe-4S] cluster as cofactor.

The protein resides in the cytoplasm. The enzyme catalyses [[Fe-S] cluster scaffold protein carrying a second [4Fe-4S](2+) cluster] + N(6)-octanoyl-L-lysyl-[protein] + 2 oxidized [2Fe-2S]-[ferredoxin] + 2 S-adenosyl-L-methionine + 4 H(+) = [[Fe-S] cluster scaffold protein] + N(6)-[(R)-dihydrolipoyl]-L-lysyl-[protein] + 4 Fe(3+) + 2 hydrogen sulfide + 2 5'-deoxyadenosine + 2 L-methionine + 2 reduced [2Fe-2S]-[ferredoxin]. It participates in protein modification; protein lipoylation via endogenous pathway; protein N(6)-(lipoyl)lysine from octanoyl-[acyl-carrier-protein]: step 2/2. Its function is as follows. Catalyzes the radical-mediated insertion of two sulfur atoms into the C-6 and C-8 positions of the octanoyl moiety bound to the lipoyl domains of lipoate-dependent enzymes, thereby converting the octanoylated domains into lipoylated derivatives. This Pseudoalteromonas translucida (strain TAC 125) protein is Lipoyl synthase.